Consider the following 353-residue polypeptide: Protein Wnt-11b (353 aa).

Positions methionine 1–alanine 22 are cleaved as a signal peptide. N-linked (GlcNAc...) asparagine glycans are attached at residues asparagine 31, asparagine 38, and asparagine 88. 5 disulfides stabilise this stretch: cysteine 78–cysteine 89, cysteine 128–cysteine 136, cysteine 138–cysteine 155, cysteine 208–cysteine 222, and cysteine 210–cysteine 217. A lipid anchor (O-palmitoleoyl serine; by PORCN) is attached at serine 214. Sulfotyrosine occurs at positions 274 and 281. 6 disulfide bridges follow: cysteine 282–cysteine 313, cysteine 298–cysteine 308, cysteine 312–cysteine 352, cysteine 328–cysteine 343, cysteine 330–cysteine 340, and cysteine 335–cysteine 336. Asparagine 299 carries N-linked (GlcNAc...) asparagine glycosylation.

This sequence belongs to the Wnt family. Homodimer. Secreted homodimers form a complex with wnt5a homodimers; tyrosine sulfation of both wnt11 and wnt5a by tpst1 is required for this interaction. Interacts with the transmembrane receptor fzd7/fz7. Interacts with lrp6 and ryk. Interacts with tdgf1/frl1. Interacts weakly with frzb1 and strongly with frzb2/crescent. Interaction with frzb2/crescent antagonizes wnt11 function in the neuroectoderm, but enhances it in mesodermal tissue. Post-translationally, glycosylation is required for protein secretion. In terms of processing, palmitoleoylation is required for efficient binding to frizzled receptors. Depalmitoleoylation leads to Wnt signaling pathway inhibition. As to expression, transcripts are expressed ubiquitously in early oocytes but become vegetally localized during mid-oogenesis then enriched on the dorsal side by the 8 to 16 cell stage. The protein becomes asymmetrically concentrated on the dorsal side by the 64-cell stage. During gastrulation, expressed in the lateral and ventral marginal zone, and during tadpole stages in the somites and first branchial arch. Weakly expressed in the pronephros from at least stage 12.5, with kidney expression increasing until stage 35. Expressed in the prospective posterior gut between stages 13 and 20, and in the deep foregut endoderm. Prior to neural crest cell migration, expressed in a domain flanking the neural crest on the lateral or epidermal side (the opposite side to wnt11/wnt11-r).

It is found in the secreted. Its subcellular location is the extracellular space. It localises to the extracellular matrix. Its function is as follows. Ligand for the frizzled7 transmembrane receptor. Primarily acts via non-canonical Wnt pathways mediated by either Ca(2+) and PKC, or by JNK and dvl2/dsh. Depending on the cellular context, can also signal via the canonical Wnt pathway mediated by beta-catenin and dvl2/dsh. May also inhibit canonical Wnt signaling. Maternally initiates dorsal/ventral axis formation by a canonical route, which signals via lrp6. In a complex with wnt5a, activates the canonical and non-canonical processes involved in axis formation. In the non-canonical pathway, acts through fzd7/fz7 to induce phosphorylation of dvl2/dsh. Signals through a non-canonical Wnt pathway to regulate convergent extension movements during gastrulation. Interactions with the secreted Wnt antagonist sfrp5 to coordinate foregut development, acting via a non-canonical Wnt pathway whereby sfrp5 restricts wnt11b activity to prevent inappropriate foregut formation. Mediates cardiogenesis via non-canonical Wnt signaling involving JNK-activation and PKC. Acts redundantly with wnt11/wnt11r during pronephros induction. This is Protein Wnt-11b (wnt11b) from Xenopus laevis (African clawed frog).